Here is a 176-residue protein sequence, read N- to C-terminus: ATP synthase subunit b, chloroplastic (176 aa).

A helical membrane pass occupies residues 19–39 (LDLLETNIINIFILIIILIYL).

Belongs to the ATPase B chain family. F-type ATPases have 2 components, F(1) - the catalytic core - and F(0) - the membrane proton channel. F(1) has five subunits: alpha(3), beta(3), gamma(1), delta(1), epsilon(1). F(0) has four main subunits: a(1), b(1), b'(1) and c(10-14). The alpha and beta chains form an alternating ring which encloses part of the gamma chain. F(1) is attached to F(0) by a central stalk formed by the gamma and epsilon chains, while a peripheral stalk is formed by the delta, b and b' chains.

It localises to the plastid. It is found in the chloroplast thylakoid membrane. Its function is as follows. F(1)F(0) ATP synthase produces ATP from ADP in the presence of a proton or sodium gradient. F-type ATPases consist of two structural domains, F(1) containing the extramembraneous catalytic core and F(0) containing the membrane proton channel, linked together by a central stalk and a peripheral stalk. During catalysis, ATP synthesis in the catalytic domain of F(1) is coupled via a rotary mechanism of the central stalk subunits to proton translocation. Functionally, component of the F(0) channel, it forms part of the peripheral stalk, linking F(1) to F(0). This Galdieria sulphuraria (Red alga) protein is ATP synthase subunit b, chloroplastic.